The sequence spans 352 residues: N-acetyl-gamma-glutamyl-phosphate reductase (352 aa).

Residue cysteine 156 is part of the active site.

The protein belongs to the NAGSA dehydrogenase family. Type 1 subfamily.

It localises to the cytoplasm. It carries out the reaction N-acetyl-L-glutamate 5-semialdehyde + phosphate + NADP(+) = N-acetyl-L-glutamyl 5-phosphate + NADPH + H(+). It functions in the pathway amino-acid biosynthesis; L-arginine biosynthesis; N(2)-acetyl-L-ornithine from L-glutamate: step 3/4. Functionally, catalyzes the NADPH-dependent reduction of N-acetyl-5-glutamyl phosphate to yield N-acetyl-L-glutamate 5-semialdehyde. This chain is N-acetyl-gamma-glutamyl-phosphate reductase, found in Afipia carboxidovorans (strain ATCC 49405 / DSM 1227 / KCTC 32145 / OM5) (Oligotropha carboxidovorans).